Reading from the N-terminus, the 201-residue chain is Acyl-homoserine-lactone synthase (201 aa).

It belongs to the autoinducer synthase family.

It catalyses the reaction a fatty acyl-[ACP] + S-adenosyl-L-methionine = an N-acyl-L-homoserine lactone + S-methyl-5'-thioadenosine + holo-[ACP] + H(+). Its function is as follows. Required for the synthesis of BHL (N-butanoyl-L-homoserine lactone), and HHL (N-hexanoyl-L-homoserine lactone) autoinducer molecules which bind to RhlR and thus acts in elastase biosynthesis regulation. This chain is Acyl-homoserine-lactone synthase (rhlI), found in Pseudomonas aeruginosa (strain ATCC 15692 / DSM 22644 / CIP 104116 / JCM 14847 / LMG 12228 / 1C / PRS 101 / PAO1).